The following is an 84-amino-acid chain: Envelope glycoprotein N (84 aa).

The N-terminal stretch at 1–26 (MSCKKGARQRLYVSLWLFYILVFAAA) is a signal peptide. Topologically, residues 27-45 (TEMDFYSSECHSHTYEIVL) are virion surface. The chain crosses the membrane as a helical span at residues 46–66 (NSFSSIWLLINLFLLLCSFAI). The Intravirion segment spans residues 67-84 (FLKYWCYKTFASETVKGY).

The protein belongs to the herpesviridae glycoprotein N family. Interacts (via N-terminus) with gM (via N-terminus). The gM-gN heterodimer forms the gCII complex.

The protein localises to the virion membrane. It localises to the host membrane. It is found in the host Golgi apparatus. Its subcellular location is the host trans-Golgi network. Its function is as follows. Envelope glycoprotein necessary for proper maturation of gM and modulation of its membrane fusion activity. Also plays a critical role in virion morphogenesis. The polypeptide is Envelope glycoprotein N (Human herpesvirus 6B (strain Z29) (HHV-6 variant B)).